Consider the following 409-residue polypeptide: Putative competence-damage inducible protein (409 aa).

The protein belongs to the CinA family.

In Clostridium botulinum (strain Loch Maree / Type A3), this protein is Putative competence-damage inducible protein.